The sequence spans 298 residues: Putative ankyrin repeat-containing protein TP_0502 (298 aa).

4 ANK repeats span residues 143–172 (CFEE…SAAL), 176–205 (RGTP…PVDQ), 210–239 (RAYS…DPNV), and 243–272 (NGQT…NPYL).

The chain is Putative ankyrin repeat-containing protein TP_0502 from Treponema pallidum (strain Nichols).